The sequence spans 222 residues: Eukaryotic translation initiation factor 4E-1 (222 aa).

A compositionally biased stretch (basic and acidic residues) spans 1-22 (MVDEVEKPASLEESKTNTREVE). The tract at residues 1–37 (MVDEVEKPASLEESKTNTREVEEGAEEVIESDDTMSS) is disordered. Acidic residues predominate over residues 23 to 33 (EGAEEVIESDD). EIF4G-binding regions lie at residues 47-50 (HPLE) and 57-93 (FDNP…NNIH). Residues 65 to 70 (KQAAWG), Lys97, and 115 to 116 (WE) contribute to the mRNA site. An intrachain disulfide couples Cys120 to Cys158. An EIF4G-binding region spans residues 141–150 (YTLLAMIGEQ). MRNA contacts are provided by residues 165–170 (RVRQEK) and 210–214 (KKLDR).

It belongs to the eukaryotic initiation factor 4E family. EIF4F is a multi-subunit complex, the composition of which varies with external and internal environmental conditions. It is composed of at least EIF4A, EIF4E and EIF4G. EIF4E is also known to interact with other partners. In higher plants two isoforms of EIF4F have been identified, named isoform EIF4F and isoform EIF(iso)4F. Isoform EIF4F has subunits p220 and p26, whereas isoform EIF(iso)4F has subunits p82 and p28. In terms of processing, according to the redox status, the Cys-120-Cys-158 disulfide bridge may have a role in regulating protein function by affecting its ability to bind capped mRNA. As to expression, expressed ubiquitously in seedlings, roots, leaves, sepals, petals, anthers and dehisced pollen, with highest levels in pollen, maturing anthers and roots. Strongly expressed in susceptible plants but not in resistant ones.

It localises to the nucleus. The protein localises to the cytoplasm. Functionally, component of the protein complex eIF4F, which is involved in the recognition of the mRNA cap, ATP-dependent unwinding of 5'-terminal secondary structure and recruitment of mRNA to the ribosome. Recognizes and binds the 7-methylguanosine-containing mRNA cap during an early step in the initiation of protein synthesis and facilitates ribosome binding by inducing the unwinding of the mRNAs secondary structures. Key component of recessive resistance to potyviruses. Its function is as follows. (Microbial infection) Susceptibility host factor required for viral infection (e.g. potato virus Y (PVY) and pepper mottle virus (PepMoV)) by recruiting viral RNAs to the host ribosomal complex via an interaction with viral genome-linked protein (VPg). The sequence is that of Eukaryotic translation initiation factor 4E-1 from Nicotiana tabacum (Common tobacco).